Consider the following 348-residue polypeptide: MFKMVSSPHTHSSNLTAKFMLWVMVAMLPALGMQAYFFGYGVFIQVFIALLLAVAIEIAIAKLRRKPTAFYVADLSGVLTALILAISIPPYAPYWIIVIGIIVALLLAKHSYGGLGQNLFNPAMVAYALLLVSFPVQMTGWLVPIDLLNEPPTFGDAISLVFSGVTSDGFSVHQLLGSVDGIAQATPLDSAKTSMQKLGVEGVLQSPIFSGLFANGWWQINLAFLAGGLLLIYKRIIHWQIPAAMLGMFALLSGLTDLLLPHTHLNVVSQLFSGAMMFGAFFIATDPVTASITPRGKLIFGGLIGLFVYLIRYYGNYPDAVAFSVLLANICVPLIDHYTQPRLYGSGR.

The next 5 membrane-spanning stretches (helical) occupy residues 15 to 35, 36 to 56, 67 to 87, 88 to 108, and 125 to 145; these read LTAK…GMQA, YFFG…AVAI, PTAF…LAIS, IPPY…LLLA, and VAYA…LVPI. Thr-186 carries the post-translational modification FMN phosphoryl threonine. Transmembrane regions (helical) follow at residues 212 to 232, 241 to 261, 265 to 285, 298 to 318, and 320 to 340; these read LFAN…LLLI, IPAA…LLLP, LNVV…FIAT, LIFG…GNYP, and AVAF…HYTQ.

Belongs to the NqrB/RnfD family. As to quaternary structure, the complex is composed of six subunits: RnfA, RnfB, RnfC, RnfD, RnfE and RnfG. FMN is required as a cofactor.

It localises to the cell inner membrane. Part of a membrane-bound complex that couples electron transfer with translocation of ions across the membrane. The polypeptide is Ion-translocating oxidoreductase complex subunit D (Actinobacillus pleuropneumoniae serotype 5b (strain L20)).